Reading from the N-terminus, the 1327-residue chain is Putative ATP-dependent RNA helicase ucp12 (1327 aa).

Disordered regions lie at residues 1-58 (MGSK…KQLV) and 201-222 (QAAR…NEKV). The span at 18-41 (SKNKEKNIKGKKKNSLDPIEKNKQ) shows a compositional bias: basic and acidic residues. Positions 42–58 (ETAGLQTTSRPTAKQLV) are enriched in polar residues. The region spanning 276-315 (EPDTSIVNDLISLGFRDIHAKEACQYCVSLEDALEWLIIH) is the UBA domain. Positions 405-504 (DDVSALQSIL…NHLQENIEDF (100 aa)) constitute an RWD domain. In terms of domain architecture, Helicase ATP-binding spans 587–756 (MDAIQHSQVV…FGNAGHLHIH (170 aa)). 600–607 (GETGSGKS) contacts ATP. Positions 703–706 (DEVH) match the DEAH box motif. The region spanning 797–968 (LISRLVSSID…QVCLNVVPLV (172 aa)) is the Helicase C-terminal domain.

This sequence belongs to the DEAD box helicase family. DEAH subfamily.

It localises to the cytoplasm. The enzyme catalyses ATP + H2O = ADP + phosphate + H(+). Probable ATP-binding RNA helicase. This chain is Putative ATP-dependent RNA helicase ucp12 (ucp12), found in Schizosaccharomyces pombe (strain 972 / ATCC 24843) (Fission yeast).